The following is a 136-amino-acid chain: 5-hydroxyisourate hydrolase (136 aa).

The first 22 residues, 1-22 (MKRHILATVIASLVAAPAMALA), serve as a signal peptide directing secretion. The substrate site is built by His31, Arg69, and Tyr133.

Belongs to the transthyretin family. 5-hydroxyisourate hydrolase subfamily. As to quaternary structure, homotetramer.

The protein localises to the periplasm. It catalyses the reaction 5-hydroxyisourate + H2O = 5-hydroxy-2-oxo-4-ureido-2,5-dihydro-1H-imidazole-5-carboxylate + H(+). Catalyzes the hydrolysis of 5-hydroxyisourate (HIU) to 2-oxo-4-hydroxy-4-carboxy-5-ureidoimidazoline (OHCU). The chain is 5-hydroxyisourate hydrolase (hiuH) from Salmonella dublin.